The chain runs to 250 residues: Type III pantothenate kinase (250 aa).

6 to 13 (DVGNTNTV) is an ATP binding site. 103-106 (GADR) provides a ligand contact to substrate. Asp105 (proton acceptor) is an active-site residue. Residue Asp125 coordinates K(+). Residue Thr128 coordinates ATP. A substrate-binding site is contributed by Thr180.

It belongs to the type III pantothenate kinase family. In terms of assembly, homodimer. NH4(+) serves as cofactor. The cofactor is K(+).

The protein localises to the cytoplasm. It catalyses the reaction (R)-pantothenate + ATP = (R)-4'-phosphopantothenate + ADP + H(+). It participates in cofactor biosynthesis; coenzyme A biosynthesis; CoA from (R)-pantothenate: step 1/5. Its function is as follows. Catalyzes the phosphorylation of pantothenate (Pan), the first step in CoA biosynthesis. In Frankia casuarinae (strain DSM 45818 / CECT 9043 / HFP020203 / CcI3), this protein is Type III pantothenate kinase.